Consider the following 404-residue polypeptide: Multidrug resistance protein MdtG (404 aa).

Helical transmembrane passes span 19 to 39, 56 to 76, 90 to 110, 113 to 133, 144 to 164, 171 to 191, 222 to 242, 254 to 274, 288 to 308, 317 to 337, and 376 to 396; these read LGCFLTGAAFSLVMPFLPLYV, LVFSITFLFSAIASPFWGGLA, LGMAIVMLLMGMAQNIWQFLI, ALLGLLGGFIPNANALIATQV, TLSTGGVSGALLGPLAGGLLA, PVFFITASVLFICFLLTFFFI, LFVTTLIIQVATGSIAPILTL, IAFISGMIASVPGVAALLSAP, ILIVALIISVLLLIPMSFVQT, FLLGAADGALLPAVQTLLVYN, and AVFCVTAGVVLFNAIYSWNSL.

It belongs to the major facilitator superfamily. DHA1 family. MdtG (TC 2.A.1.2.20) subfamily.

It localises to the cell inner membrane. The sequence is that of Multidrug resistance protein MdtG from Salmonella agona (strain SL483).